Reading from the N-terminus, the 263-residue chain is MPLPVALQTRLAKRGILKHLEPEPEEEIIAEDYDDDPVDYEATRIEGLPPSWYKVFDPSCGLPYYWNVETDLVSWLSPHDPNFVVTKSAKKVRNNNADAEDKSDRNLEKVDRNHEKSDRSHEKPDRSHEKADRNHEKNDRERERNYDKVDRERDRDRERERAFDKADREEGKDRRHHRREELAPYPKNKKATSRKDEELDPMDPSSYSDAPRGTWSTGLPKRNEAKTGADTTAAGPLFQQRPYPSPGAVLRANAEASRTKQQD.

Residues 46–80 enclose the WW domain; that stretch reads EGLPPSWYKVFDPSCGLPYYWNVETDLVSWLSPHD. The interval 94 to 263 is disordered; the sequence is NNNADAEDKS…AEASRTKQQD (170 aa). The segment covering 99–173 has biased composition (basic and acidic residues); the sequence is AEDKSDRNLE…DKADREEGKD (75 aa). The 1-1; approximate repeat unit spans residues 104 to 110; the sequence is DRNLEKV. A 5 X 7 AA approximate tandem repeats of D-R-[NS]-H-E-K-S region spans residues 104-138; that stretch reads DRNLEKVDRNHEKSDRSHEKPDRSHEKADRNHEKN. The 1-2 repeat unit spans residues 111–117; the sequence is DRNHEKS. One copy of the 1-3; approximate repeat lies at 118 to 124; that stretch reads DRSHEKP. Residues 125-131 form a 1-4; approximate repeat; it reads DRSHEKA. One copy of the 1-5; approximate repeat lies at 132 to 138; it reads DRNHEKN. Tandem repeats lie at residues 139–140, 141–142, 143–144, 150–151, 152–153, 154–155, 156–157, 158–159, and 160–161. A 3 X 2 AA tandem repeats of [DE]-R region spans residues 139–144; the sequence is DRERER. The 6 X 2 AA tandem repeats of [DE]-R stretch occupies residues 150–161; sequence DRERDRDRERER. An important for interaction with TXNL4A region spans residues 243–253; it reads YPSPGAVLRAN. Phosphoserine is present on S245.

In terms of assembly, interacts with POU3F2/Brn-2, ATXN1, TXNL4A, HTT and AR. Interaction with ATXN1 correlates positively with the length of the polyglutamine tract. Interacts with RNA polymerase II large subunit in a phosphorylation-dependent manner. Forms a ternary complex with ATXN1 mutant and phosphorylated RNA polymerase II. Interacts (via C-terminus) with TXNL4A and CD2BP2. Interacts (via WW domain) with ATN1 and SF3B1, and may interact with additional splice factors. Interacts (via WW domain) with WBP11; Leading to reduce interaction between PQBP1 and TXNL4A. Interacts with CAPRIN1. Interacts with DDX1. Interacts with SFPQ. Interacts with KHSRP. In terms of tissue distribution, detected in brain cortex and hippocampus neurons (at protein level). Expressed in brain with high level in cerebellar cortex, hippocampus and olfactory bulb.

It localises to the nucleus. The protein resides in the nucleus speckle. The protein localises to the cytoplasmic granule. In terms of biological role, intrinsically disordered protein that acts as a scaffold, and which is involved in different processes, such as pre-mRNA splicing, transcription regulation, innate immunity and neuron development. Interacts with splicing-related factors via the intrinsically disordered region and regulates alternative splicing of target pre-mRNA species. May suppress the ability of POU3F2 to transactivate the DRD1 gene in a POU3F2 dependent manner. Can activate transcription directly or via association with the transcription machinery. May be involved in ATXN1 mutant-induced cell death. The interaction with ATXN1 mutant reduces levels of phosphorylated RNA polymerase II large subunit. Involved in the assembly of cytoplasmic stress granule, possibly by participating in the transport of neuronal RNA granules. Also acts as an innate immune sensor of infection by retroviruses, by detecting the presence of reverse-transcribed DNA in the cytosol. Directly binds retroviral reverse-transcribed DNA in the cytosol and interacts with CGAS, leading to activate the cGAS-STING signaling pathway, triggering type-I interferon production. The sequence is that of Polyglutamine-binding protein 1 (Pqbp1) from Mus musculus (Mouse).